The sequence spans 307 residues: Nodulation protein NoeC (307 aa).

The next 8 helical transmembrane spans lie at 46–66 (APLW…YVLN), 91–111 (SGLT…VCAI), 117–137 (LFAI…KVRG), 140–160 (VLDL…GATA), 163–183 (IPVP…LASI), 212–232 (IVAL…ELFV), 238–258 (AQGP…AYWI), and 279–299 (VTDG…VFLM).

The protein localises to the cell membrane. In Azorhizobium caulinodans (strain ATCC 43989 / DSM 5975 / JCM 20966 / LMG 6465 / NBRC 14845 / NCIMB 13405 / ORS 571), this protein is Nodulation protein NoeC (noeC).